The primary structure comprises 772 residues: Rho guanine nucleotide exchange factor 6 (772 aa).

The Calponin-homology (CH) domain maps to 1-111 (MNPEERVVTW…TLLAVNKATE (111 aa)). Positions 115–158 (SERPCGRSSSLSATTSSQTNPQAAVPSTTPEQQSEEKAAEMTEN) are disordered. The segment covering 122 to 133 (SSSLSATTSSQT) has biased composition (low complexity). Serine 126 carries the phosphoserine modification. A Phosphothreonine modification is found at threonine 133. The span at 134-146 (NPQAAVPSTTPEQ) shows a compositional bias: polar residues. An SH3 domain is found at 160–219 (SHQLIVKARFNFKQTNEDELSVCKGDIIYVTRVEEGGWWEGTLNGRTGWFPSNYVREIKP). Serine 225 carries the phosphoserine modification. The region spanning 241 to 421 (YYTVVLQNIL…KSLMGQCQDL (181 aa)) is the DH domain. A PH domain is found at 443–548 (DIKTLGNVIF…WMEQLNRLTK (106 aa)). A Phosphoserine modification is found at serine 488. Residues 557-573 (SKTSSSSCSTHSSFSST) are compositionally biased toward low complexity. A disordered region spans residues 557-581 (SKTSSSSCSTHSSFSSTGQPRGPLE). Serine 640 and serine 680 each carry phosphoserine.

Interacts with PAK kinases through the SH3 domain. Interacts with GIT1. Interacts with PARVB. Component of cytoplasmic complexes, which also contain PXN, GIT1 and PAK1. Interacts with BIN2. Identified in a complex with BIN2 and GIT2. Interacts with PARVG; the guanine nucleotide exchange factor activity of ARHGEF6 is essential for PARVG-induced enhancement of cell spreading.

The protein resides in the cell projection. It localises to the lamellipodium. Its function is as follows. Acts as a RAC1 guanine nucleotide exchange factor (GEF). This chain is Rho guanine nucleotide exchange factor 6 (Arhgef6), found in Rattus norvegicus (Rat).